The chain runs to 120 residues: Large ribosomal subunit protein uL18 (120 aa).

It belongs to the universal ribosomal protein uL18 family. Part of the 50S ribosomal subunit; part of the 5S rRNA/L5/L18/L25 subcomplex. Contacts the 5S and 23S rRNAs.

In terms of biological role, this is one of the proteins that bind and probably mediate the attachment of the 5S RNA into the large ribosomal subunit, where it forms part of the central protuberance. This is Large ribosomal subunit protein uL18 from Gluconacetobacter diazotrophicus (strain ATCC 49037 / DSM 5601 / CCUG 37298 / CIP 103539 / LMG 7603 / PAl5).